The chain runs to 684 residues: Phenoloxidase 1 (684 aa).

Positions Met1–Arg50 are cleaved as a propeptide — removed by PPAF1. N-linked (GlcNAc...) asparagine glycosylation is present at Asn80. His208, His212, and His237 together coordinate Cu cation. The active-site Proton acceptor is the Glu349. N-linked (GlcNAc...) asparagine glycans are attached at residues Asn352 and Asn356. The Cu cation site is built by His364, His368, and His404. 3 N-linked (GlcNAc...) asparagine glycosylation sites follow: Asn486, Asn491, and Asn545. 2 cysteine pairs are disulfide-bonded: Cys579–Cys621 and Cys581–Cys628.

The protein belongs to the tyrosinase family. Dimer. Might form a homodimer or a heterodimer with PPO1. Might interact with PPAF2 (via CLIP domain); the interaction might be required for PPO1 activity. The cofactor is Cu(2+). In terms of processing, propeptide cleaved by PPAF1. Hemocytes.

Its subcellular location is the secreted. This is a copper-containing oxidase that functions in the formation of pigments such as melanins and other polyphenolic compounds. Catalyzes the oxidation of o-diphenols (N-acetyldopamine, 4-methylcatechol and dopamine). Cannot oxidize monophenols and p-phenols (L-tyrosine, tyramine, gentisic acid and hydroquinone). Binds to the surface of hemocytes and is involved in hemocyte melanization. Activation of the enzyme in response to bacterial lipopolysaccharides (LPS) suggests it may play a role in innate immunity. This chain is Phenoloxidase 1, found in Holotrichia diomphalia (Korean black chafer).